The primary structure comprises 250 residues: 3-deoxy-manno-octulosonate cytidylyltransferase (250 aa).

Belongs to the KdsB family.

It localises to the cytoplasm. The catalysed reaction is 3-deoxy-alpha-D-manno-oct-2-ulosonate + CTP = CMP-3-deoxy-beta-D-manno-octulosonate + diphosphate. It functions in the pathway nucleotide-sugar biosynthesis; CMP-3-deoxy-D-manno-octulosonate biosynthesis; CMP-3-deoxy-D-manno-octulosonate from 3-deoxy-D-manno-octulosonate and CTP: step 1/1. It participates in bacterial outer membrane biogenesis; lipopolysaccharide biosynthesis. Activates KDO (a required 8-carbon sugar) for incorporation into bacterial lipopolysaccharide in Gram-negative bacteria. This chain is 3-deoxy-manno-octulosonate cytidylyltransferase, found in Yersinia pseudotuberculosis serotype O:1b (strain IP 31758).